The chain runs to 87 residues: Small ribosomal subunit protein bS20 (87 aa).

The interval 1–26 (MANIKSAKKRAVQSEKARKHNASRRS) is disordered.

The protein belongs to the bacterial ribosomal protein bS20 family.

In terms of biological role, binds directly to 16S ribosomal RNA. The protein is Small ribosomal subunit protein bS20 of Klebsiella pneumoniae (strain 342).